A 380-amino-acid chain; its full sequence is Chaperone protein DnaJ (380 aa).

The region spanning 5–70 (DYYEALGVAR…RKRTAYDQFG (66 aa)) is the J domain. Residues 137–215 (GTTAKIRIPT…CRGEGRVREH (79 aa)) form a CR-type zinc finger. Zn(2+) contacts are provided by Cys150, Cys153, Cys167, Cys170, Cys189, Cys192, Cys203, and Cys206. CXXCXGXG motif repeat units lie at residues 150–157 (CKACEGSG), 167–174 (CPTCGGHG), 189–196 (CPRCHGSG), and 203–210 (CSTCRGEG). The interval 222–247 (IPPGVDTGDRIRLTGEGEAGESGGPP) is disordered.

The protein belongs to the DnaJ family. As to quaternary structure, homodimer. Zn(2+) serves as cofactor.

It is found in the cytoplasm. Participates actively in the response to hyperosmotic and heat shock by preventing the aggregation of stress-denatured proteins and by disaggregating proteins, also in an autonomous, DnaK-independent fashion. Unfolded proteins bind initially to DnaJ; upon interaction with the DnaJ-bound protein, DnaK hydrolyzes its bound ATP, resulting in the formation of a stable complex. GrpE releases ADP from DnaK; ATP binding to DnaK triggers the release of the substrate protein, thus completing the reaction cycle. Several rounds of ATP-dependent interactions between DnaJ, DnaK and GrpE are required for fully efficient folding. Also involved, together with DnaK and GrpE, in the DNA replication of plasmids through activation of initiation proteins. The chain is Chaperone protein DnaJ from Nitrosococcus oceani (strain ATCC 19707 / BCRC 17464 / JCM 30415 / NCIMB 11848 / C-107).